A 158-amino-acid chain; its full sequence is Transcription elongation factor GreA (158 aa).

It belongs to the GreA/GreB family.

Functionally, necessary for efficient RNA polymerase transcription elongation past template-encoded arresting sites. The arresting sites in DNA have the property of trapping a certain fraction of elongating RNA polymerases that pass through, resulting in locked ternary complexes. Cleavage of the nascent transcript by cleavage factors such as GreA or GreB allows the resumption of elongation from the new 3'terminus. GreA releases sequences of 2 to 3 nucleotides. The chain is Transcription elongation factor GreA from Psychrobacter cryohalolentis (strain ATCC BAA-1226 / DSM 17306 / VKM B-2378 / K5).